A 456-amino-acid chain; its full sequence is Chromosomal replication initiator protein DnaA (456 aa).

The segment at 1–83 (MTASLWQQCL…LRFDIGNRPH (83 aa)) is domain I, interacts with DnaA modulators. The segment at 83–119 (HPVAVARAPARGADPVNNSQKSWESKAEAKPEPNHKS) is domain II. Positions 92 to 122 (ARGADPVNNSQKSWESKAEAKPEPNHKSNTN) are disordered. Residues 105 to 117 (WESKAEAKPEPNH) are compositionally biased toward basic and acidic residues. Residues 120 to 336 (NTNVNYTFEN…GALNRVIANA (217 aa)) are domain III, AAA+ region. Positions 164, 166, 167, and 168 each coordinate ATP. The domain IV, binds dsDNA stretch occupies residues 337-456 (NFTGRAINID…YSNLIRTLSS (120 aa)).

It belongs to the DnaA family. As to quaternary structure, oligomerizes as a right-handed, spiral filament on DNA at oriC.

Its subcellular location is the cytoplasm. Plays an essential role in the initiation and regulation of chromosomal replication. ATP-DnaA binds to the origin of replication (oriC) to initiate formation of the DNA replication initiation complex once per cell cycle. Binds the DnaA box (a 9 base pair repeat at the origin) and separates the double-stranded (ds)DNA. Forms a right-handed helical filament on oriC DNA; dsDNA binds to the exterior of the filament while single-stranded (ss)DNA is stabiized in the filament's interior. The ATP-DnaA-oriC complex binds and stabilizes one strand of the AT-rich DNA unwinding element (DUE), permitting loading of DNA polymerase. After initiation quickly degrades to an ADP-DnaA complex that is not apt for DNA replication. Binds acidic phospholipids. This chain is Chromosomal replication initiator protein DnaA, found in Aeromonas hydrophila subsp. hydrophila (strain ATCC 7966 / DSM 30187 / BCRC 13018 / CCUG 14551 / JCM 1027 / KCTC 2358 / NCIMB 9240 / NCTC 8049).